The chain runs to 80 residues: Bowman-Birk type proteinase inhibitor (80 aa).

7 disulfide bridges follow: Cys19–Cys70, Cys20–Cys35, Cys23–Cys66, Cys25–Cys33, Cys41–Cys47, Cys44–Cys59, and Cys49–Cys57.

In terms of assembly, occurs as a monomer, dimer or trimer. The dimer may be the active form. In terms of processing, binds calcium, probably through His-3 to His-6.

Functionally, protease inhibitor with activity against cysteine, aspartic and serine proteases. Highest activity against serine proteases, in particular trypsin and trypsin-like proteases. This is Bowman-Birk type proteinase inhibitor from Phaseolus acutifolius (Tepary bean).